The chain runs to 491 residues: Ketol-acid reductoisomerase (NADP(+)) (491 aa).

The KARI N-terminal Rossmann domain maps to 15–208 (AQLGKCRFMG…GGHRAGVLES (194 aa)). NADP(+) contacts are provided by residues 45 to 48 (CGAQ), arginine 68, arginine 76, serine 78, and 108 to 110 (DKQ). The active site involves histidine 132. Glycine 158 is a binding site for NADP(+). 2 KARI C-terminal knotted domains span residues 209-344 (SFVA…TAPQ) and 345-484 (FEGK…MTDM). Aspartate 217, glutamate 221, glutamate 389, and glutamate 393 together coordinate Mg(2+). Position 414 (serine 414) interacts with substrate.

Belongs to the ketol-acid reductoisomerase family. Mg(2+) is required as a cofactor.

It carries out the reaction (2R)-2,3-dihydroxy-3-methylbutanoate + NADP(+) = (2S)-2-acetolactate + NADPH + H(+). It catalyses the reaction (2R,3R)-2,3-dihydroxy-3-methylpentanoate + NADP(+) = (S)-2-ethyl-2-hydroxy-3-oxobutanoate + NADPH + H(+). The protein operates within amino-acid biosynthesis; L-isoleucine biosynthesis; L-isoleucine from 2-oxobutanoate: step 2/4. Its pathway is amino-acid biosynthesis; L-valine biosynthesis; L-valine from pyruvate: step 2/4. Functionally, involved in the biosynthesis of branched-chain amino acids (BCAA). Catalyzes an alkyl-migration followed by a ketol-acid reduction of (S)-2-acetolactate (S2AL) to yield (R)-2,3-dihydroxy-isovalerate. In the isomerase reaction, S2AL is rearranged via a Mg-dependent methyl migration to produce 3-hydroxy-3-methyl-2-ketobutyrate (HMKB). In the reductase reaction, this 2-ketoacid undergoes a metal-dependent reduction by NADPH to yield (R)-2,3-dihydroxy-isovalerate. The chain is Ketol-acid reductoisomerase (NADP(+)) from Salmonella agona (strain SL483).